The primary structure comprises 175 residues: Disulfide bond formation protein B 2 (175 aa).

Over 1–9 (MYLARTRFL) the chain is Cytoplasmic. The chain crosses the membrane as a helical span at residues 10–26 (FFLASLACASIIGVAFY). Residues 27-44 (LQQAVGLDPCTLCMVQRA) are Periplasmic-facing. C36 and C39 are oxidised to a cystine. The helical transmembrane segment at 45 to 61 (AFIACGVLALCAACHAP) threads the bilayer. Topologically, residues 62 to 68 (GPTGTRR) are cytoplasmic. A helical transmembrane segment spans residues 69–85 (YSLGLLLVALAGLAGAG). Residues 86–142 (TQVWLQTASADQLIPFITRLEQILSLLSLDMCIDRLRSDALFCAEITWTLFGISLPE) are Periplasmic-facing. A helical transmembrane segment spans residues 143 to 161 (WSLLAFTGLALLPLYPLFS). Residues 162–175 (ELSHWLATRDRGGY) lie on the Cytoplasmic side of the membrane.

It belongs to the DsbB family.

The protein localises to the cell inner membrane. Its function is as follows. Required for disulfide bond formation in some periplasmic proteins. Acts by oxidizing the DsbA protein. The chain is Disulfide bond formation protein B 2 from Pseudomonas syringae pv. syringae (strain B728a).